Here is a 130-residue protein sequence, read N- to C-terminus: Small ribosomal subunit protein uS11c (130 aa).

This sequence belongs to the universal ribosomal protein uS11 family. In terms of assembly, part of the 30S ribosomal subunit.

It is found in the plastid. It localises to the chloroplast. The sequence is that of Small ribosomal subunit protein uS11c from Drimys granadensis.